Here is a 244-residue protein sequence, read N- to C-terminus: Glutathione S-transferase theta-2B (244 aa).

The 81-residue stretch at 2 to 82 folds into the GST N-terminal domain; that stretch reads GLELFLDLVS…YLSCKYQTPD (81 aa). Residues 40–41, 53–54, 66–67, and 104–107 each bind glutathione; these read HK, KL, ES, and DCIR. The 137-residue stretch at 88–224 folds into the GST C-terminal domain; the sequence is DLQARARVHE…SILEQAAKKT (137 aa).

It belongs to the GST superfamily. Theta family. Homodimer. In terms of tissue distribution, expressed at low levels in liver. In lung, expressed at low levels in ciliated bronchiolar cells, alveolar macrophages and alveolar type II cells.

It localises to the cytoplasm. Its subcellular location is the cytosol. The enzyme catalyses RX + glutathione = an S-substituted glutathione + a halide anion + H(+). Conjugation of reduced glutathione to a wide number of exogenous and endogenous hydrophobic electrophiles. Has a sulfatase activity. The chain is Glutathione S-transferase theta-2B (GSTT2B) from Homo sapiens (Human).